Here is a 509-residue protein sequence, read N- to C-terminus: Poly(A) RNA polymerase GLD2-B (509 aa).

Residues Pro-88–Asn-125 form a disordered region. Residues Phe-116–Asn-125 show a composition bias toward polar residues. The Mg(2+) site is built by Asp-240 and Asp-242. A PAP-associated domain is found at Leu-409–Asn-462.

This sequence belongs to the DNA polymerase type-B-like family. GLD2 subfamily. As to quaternary structure, component of a complex at least composed of cpeb1, cpsf1, tent2/gld2, pabpc1/ePAB, parn and sympk. Following oocyte maturation, parn is expelled from the complex. Interacts with rbfox2. Interacts with sympk. Mg(2+) is required as a cofactor. Requires Mn(2+) as cofactor.

The protein resides in the cytoplasm. It catalyses the reaction RNA(n) + ATP = RNA(n)-3'-adenine ribonucleotide + diphosphate. In terms of biological role, cytoplasmic poly(A) RNA polymerase that adds successive AMP monomers to the 3'-end of specific RNAs, forming a poly(A) tail. In contrast to the canonical nuclear poly(A) RNA polymerase, it only adds poly(A) to selected cytoplasmic mRNAs during oocyte maturation. Plays a central role during oocyte maturation by mediating polyadenylation of dormant mRNAs, which contain 5'AAUAAA-3' sequence in their 3'-UTR. In immature oocytes, polyadenylation of poly(A) tails is counteracted by the ribonuclease parn. During maturation parn is excluded from the ribonucleoprotein complex, allowing poly(A) elongation and activation of mRNAs. May not play a role in replication-dependent histone mRNA degradation. The polypeptide is Poly(A) RNA polymerase GLD2-B (Xenopus laevis (African clawed frog)).